The chain runs to 154 residues: SsrA-binding protein (154 aa).

It belongs to the SmpB family.

Its subcellular location is the cytoplasm. In terms of biological role, required for rescue of stalled ribosomes mediated by trans-translation. Binds to transfer-messenger RNA (tmRNA), required for stable association of tmRNA with ribosomes. tmRNA and SmpB together mimic tRNA shape, replacing the anticodon stem-loop with SmpB. tmRNA is encoded by the ssrA gene; the 2 termini fold to resemble tRNA(Ala) and it encodes a 'tag peptide', a short internal open reading frame. During trans-translation Ala-aminoacylated tmRNA acts like a tRNA, entering the A-site of stalled ribosomes, displacing the stalled mRNA. The ribosome then switches to translate the ORF on the tmRNA; the nascent peptide is terminated with the 'tag peptide' encoded by the tmRNA and targeted for degradation. The ribosome is freed to recommence translation, which seems to be the essential function of trans-translation. In Methylobacillus flagellatus (strain ATCC 51484 / DSM 6875 / VKM B-1610 / KT), this protein is SsrA-binding protein.